The primary structure comprises 85 residues: Small ribosomal subunit protein bS20 (85 aa).

Belongs to the bacterial ribosomal protein bS20 family.

Its function is as follows. Binds directly to 16S ribosomal RNA. This Cytophaga hutchinsonii (strain ATCC 33406 / DSM 1761 / CIP 103989 / NBRC 15051 / NCIMB 9469 / D465) protein is Small ribosomal subunit protein bS20.